A 364-amino-acid polypeptide reads, in one-letter code: Probable endopolygalacturonase B (364 aa).

The signal sequence occupies residues 1-20; that stretch reads MHFFQSSLVAATMGAALVAA. Residues 21–29 constitute a propeptide that is removed on maturation; it reads APAADLETR. Cysteines 32 and 47 form a disulfide. Residues Asn138 and Asn141 are each glycosylated (N-linked (GlcNAc...) asparagine). 6 PbH1 repeats span residues 159-188, 189-210, 211-231, 240-261, 269-291, and 303-324; these read SDHL…DVGS, STYI…AVNS, GEHI…SIGS, VNDV…RIKT, VTGV…VVQQ, and TNGV…TSSA. The Proton donor role is filled by Asp203. An intrachain disulfide couples Cys205 to Cys221. His225 is a catalytic residue. Cysteines 331 and 336 form a disulfide. Asn338 carries an N-linked (GlcNAc...) asparagine glycan. Cysteines 355 and 364 form a disulfide.

It belongs to the glycosyl hydrolase 28 family.

It is found in the secreted. The catalysed reaction is (1,4-alpha-D-galacturonosyl)n+m + H2O = (1,4-alpha-D-galacturonosyl)n + (1,4-alpha-D-galacturonosyl)m.. Functionally, involved in maceration and soft-rotting of plant tissue. Hydrolyzes the 1,4-alpha glycosidic bonds of de-esterified pectate in the smooth region of the plant cell wall. This chain is Probable endopolygalacturonase B (pgaB), found in Aspergillus fumigatus (strain CBS 144.89 / FGSC A1163 / CEA10) (Neosartorya fumigata).